We begin with the raw amino-acid sequence, 390 residues long: DNA polymerase IV (390 aa).

In terms of domain architecture, UmuC spans 6–187 (VMHVDLDAFF…LDIAVMPGIG (182 aa)). The Mg(2+) site is built by D10 and D105. E106 is a catalytic residue.

It belongs to the DNA polymerase type-Y family. Monomer. Mg(2+) serves as cofactor.

The protein resides in the cytoplasm. It carries out the reaction DNA(n) + a 2'-deoxyribonucleoside 5'-triphosphate = DNA(n+1) + diphosphate. Its function is as follows. Poorly processive, error-prone DNA polymerase involved in untargeted mutagenesis. Copies undamaged DNA at stalled replication forks, which arise in vivo from mismatched or misaligned primer ends. These misaligned primers can be extended by PolIV. Exhibits no 3'-5' exonuclease (proofreading) activity. May be involved in translesional synthesis, in conjunction with the beta clamp from PolIII. This Dehalococcoides mccartyi (strain CBDB1) protein is DNA polymerase IV.